Here is a 75-residue protein sequence, read N- to C-terminus: Defensin-like protein 59 (75 aa).

The signal sequence occupies residues 1 to 19 (MNITKSYVVIFFLVMLTNS). 4 disulfide bridges follow: Cys39–Cys73, Cys43–Cys66, Cys52–Cys71, and Cys56–Cys72.

The protein belongs to the DEFL family.

The protein resides in the secreted. This is Defensin-like protein 59 from Arabidopsis thaliana (Mouse-ear cress).